A 798-amino-acid chain; its full sequence is ATP-dependent RecD2 DNA helicase (798 aa).

370-374 (GTGKT) is a binding site for ATP.

The protein belongs to the RecD family. RecD2 subfamily. Interacts with SSB (sbbA).

Its subcellular location is the cytoplasm. The protein localises to the nucleoid. The enzyme catalyses Couples ATP hydrolysis with the unwinding of duplex DNA at the replication fork by translocating in the 5'-3' direction. This creates two antiparallel DNA single strands (ssDNA). The leading ssDNA polymer is the template for DNA polymerase III holoenzyme which synthesizes a continuous strand.. It carries out the reaction ATP + H2O = ADP + phosphate + H(+). In vivo may favor replication restart by preventing RecA from binding to blocked replication forks, avoiding unnecessary recombination during replication restart. Acts as a negative modulator of the RecA-ssDNA filament, may dissasemble RecA threads, can act as both a positive and negative regulator of strand exchange. Probably stabilizes or aids normal replication fork progression, is important for survival after treatment with DNA-damaging agents that can result in replication fork stress. Overcomes the inhibition of replication restart by RecA/RecO, probably by displacing RecA. Increasing levels inhibit PriA-dependent DNA replication initiation (but have little effect on ongoing replication) in vitro; may act by disturbing SsbA assembly. Probably has a role in recombinational DNA repair. Does not seem to contribute to mismatch repair. Has 5'-3' helicase activity that is probably ATP-dependent. The sequence is that of ATP-dependent RecD2 DNA helicase from Bacillus subtilis (strain 168).